A 103-amino-acid polypeptide reads, in one-letter code: Putative sulfurtransferase YtwF (103 aa).

One can recognise a Rhodanese domain in the interval A17–K100. Residue C65 is the Cysteine persulfide intermediate of the active site.

The polypeptide is Putative sulfurtransferase YtwF (ytwF) (Bacillus subtilis (strain 168)).